The following is a 644-amino-acid chain: Exoribonuclease 2 (644 aa).

The region spanning 189–516 (RQDLTALNFV…NHRLLKAVIK (328 aa)) is the RNB domain. The S1 motif domain maps to 561 to 643 (NTRFAAEIID…ETRSIIARPA (83 aa)).

It belongs to the RNR ribonuclease family. RNase II subfamily.

Its subcellular location is the cytoplasm. The enzyme catalyses Exonucleolytic cleavage in the 3'- to 5'-direction to yield nucleoside 5'-phosphates.. Its function is as follows. Involved in mRNA degradation. Hydrolyzes single-stranded polyribonucleotides processively in the 3' to 5' direction. This is Exoribonuclease 2 from Salmonella paratyphi B (strain ATCC BAA-1250 / SPB7).